A 74-amino-acid chain; its full sequence is Delta-stichotoxin-Sgt2a (74 aa).

The signal sequence occupies residues 1 to 19 (MNRLIILVFAAVFLTLASA). Residues 20–28 (EVSEDVNMA) constitute a propeptide that is removed on maturation. Cystine bridges form between C34–C71, C36–C64, and C57–C72.

Belongs to the sea anemone sodium channel inhibitory toxin family. Type I subfamily.

The protein localises to the secreted. Its subcellular location is the nematocyst. Functionally, binds specifically to voltage-gated sodium channels (Nav), thereby delaying their inactivation during signal transduction. This Stichodactyla gigantea (Giant carpet anemone) protein is Delta-stichotoxin-Sgt2a.